The following is a 189-amino-acid chain: Probable chorismate pyruvate-lyase (189 aa).

The substrate site is built by arginine 74, leucine 113, and glutamate 175.

The protein belongs to the UbiC family.

The protein localises to the cytoplasm. It catalyses the reaction chorismate = 4-hydroxybenzoate + pyruvate. It functions in the pathway cofactor biosynthesis; ubiquinone biosynthesis. Its function is as follows. Removes the pyruvyl group from chorismate, with concomitant aromatization of the ring, to provide 4-hydroxybenzoate (4HB) for the ubiquinone pathway. In Azoarcus sp. (strain BH72), this protein is Probable chorismate pyruvate-lyase.